A 199-amino-acid polypeptide reads, in one-letter code: Peroxiredoxin-1 (199 aa).

The residue at position 2 (S2) is an N-acetylserine. The 160-residue stretch at 6–165 (AKIGHPAPNF…TLRLVQAFQF (160 aa)) folds into the Thioredoxin domain. The residue at position 7 (K7) is an N6-acetyllysine; alternate. K7 participates in a covalent cross-link: Glycyl lysine isopeptide (Lys-Gly) (interchain with G-Cter in SUMO2); alternate. K16 and K27 each carry N6-acetyllysine. At S32 the chain carries Phosphoserine. K35 carries the N6-acetyllysine; alternate modification. N6-succinyllysine; alternate is present on K35. Residue C52 is the Cysteine sulfenic acid (-SOH) intermediate of the active site. T90 carries the post-translational modification Phosphothreonine. A Glycyl lysine isopeptide (Lys-Gly) (interchain with G-Cter in SUMO2) cross-link involves residue K120. K136 carries the N6-acetyllysine modification. The disordered stretch occupies residues 176 to 199 (GWKPGSDTIKPDVQKSKEYFSKQK). A compositionally biased stretch (basic and acidic residues) spans 184 to 199 (IKPDVQKSKEYFSKQK). Residue K185 forms a Glycyl lysine isopeptide (Lys-Gly) (interchain with G-Cter in SUMO1) linkage. K197 carries the N6-acetyllysine modification.

Belongs to the peroxiredoxin family. AhpC/Prx1 subfamily. As to quaternary structure, homodimer; disulfide-linked, upon oxidation. 5 homodimers assemble to form a ring-like decamer. Interacts with GDPD5; forms a mixed-disulfide with GDPD5. Interacts with SESN1 and SESN2. Interacts with FAM107A. Phosphorylated on Thr-90 during the M-phase, which leads to a decrease in enzymatic activity. Post-translationally, acetylation increases reducing activity and resistance to superoxidation. Deacetylated by HDAC6 which decreases reducing activity. Detected in heart and skeletal muscle (at protein level).

The protein resides in the cytoplasm. It carries out the reaction a hydroperoxide + [thioredoxin]-dithiol = an alcohol + [thioredoxin]-disulfide + H2O. Thiol-specific peroxidase that catalyzes the reduction of hydrogen peroxide and organic hydroperoxides to water and alcohols, respectively. Plays a role in cell protection against oxidative stress by detoxifying peroxides and as sensor of hydrogen peroxide-mediated signaling events. Might participate in the signaling cascades of growth factors and tumor necrosis factor-alpha by regulating the intracellular concentrations of H(2)O(2). Reduces an intramolecular disulfide bond in GDPD5 that gates the ability to GDPD5 to drive postmitotic motor neuron differentiation. This Myotis lucifugus (Little brown bat) protein is Peroxiredoxin-1 (PRDX1).